Consider the following 105-residue polypeptide: Insulin-like peptide 7 (105 aa).

Positions 1–18 (MPPIILVFFLVLIPASQQ) are cleaved as a signal peptide. Residues 19–57 (YPFSLESLNDQIINEEVIEYMLENSIRSSRTRRVPDEKK) constitute a propeptide that is removed on maturation. Disulfide bonds link Cys61–Cys90, Cys73–Cys103, Cys77–Cys104, and Cys89–Cys94.

It belongs to the insulin family.

The protein resides in the secreted. Functionally, insulin-like peptide which plays a role in ageing as a consequence of daf-16 activity. The sequence is that of Insulin-like peptide 7 from Caenorhabditis elegans.